A 307-amino-acid chain; its full sequence is PCP degradation transcriptional activation protein (307 aa).

The region spanning 6 to 63 (LPLGHLMVFDALYRHGSAGKAAHALSMPQPTLSRWLAQLRTHFDDPLFVRTRSGMEPT) is the HTH lysR-type domain. A DNA-binding region (H-T-H motif) is located at residues 23–42 (AGKAAHALSMPQPTLSRWLA).

Belongs to the LysR transcriptional regulatory family.

Its function is as follows. Transcriptional activator for the pcpA, pcpB and pcpE genes for pentachlorophenol (PCP) degradation. Essential for PCP degradation. In Sphingobium chlorophenolicum, this protein is PCP degradation transcriptional activation protein (pcpR).